A 338-amino-acid polypeptide reads, in one-letter code: Glycerol-3-phosphate dehydrogenase [NAD(P)+] (338 aa).

3 residues coordinate NADPH: Ser12, Trp13, and Lys110. Lys110, Gly141, and Ser143 together coordinate sn-glycerol 3-phosphate. An NADPH-binding site is contributed by Ala145. The sn-glycerol 3-phosphate site is built by Lys196, Asp249, Ser259, Arg260, and Asn261. The active-site Proton acceptor is the Lys196. Arg260 provides a ligand contact to NADPH. NADPH-binding residues include Val284 and Glu286.

This sequence belongs to the NAD-dependent glycerol-3-phosphate dehydrogenase family.

It is found in the cytoplasm. It catalyses the reaction sn-glycerol 3-phosphate + NAD(+) = dihydroxyacetone phosphate + NADH + H(+). It carries out the reaction sn-glycerol 3-phosphate + NADP(+) = dihydroxyacetone phosphate + NADPH + H(+). The protein operates within membrane lipid metabolism; glycerophospholipid metabolism. Catalyzes the reduction of the glycolytic intermediate dihydroxyacetone phosphate (DHAP) to sn-glycerol 3-phosphate (G3P), the key precursor for phospholipid synthesis. The sequence is that of Glycerol-3-phosphate dehydrogenase [NAD(P)+] from Pediococcus pentosaceus (strain ATCC 25745 / CCUG 21536 / LMG 10740 / 183-1w).